Consider the following 324-residue polypeptide: NADH-dependent D-xylose reductase (324 aa).

Tyr-54 acts as the Proton donor in catalysis. Residue His-116 coordinates substrate. 220 to 286 (SSFGPQSFLE…SNSPDRMAQN (67 aa)) lines the NAD(+) pocket.

Belongs to the aldo/keto reductase family.

It carries out the reaction xylitol + NAD(+) = D-xylose + NADH + H(+). It catalyses the reaction xylitol + NADP(+) = D-xylose + NADPH + H(+). Its pathway is carbohydrate metabolism; D-xylose degradation. Reduces D-xylose into xylitol. Preferentially utilizes NADH as a cosubstrate. This Candida parapsilosis (Yeast) protein is NADH-dependent D-xylose reductase (XYL1).